We begin with the raw amino-acid sequence, 271 residues long: Mannosyl-3-phosphoglycerate phosphatase (271 aa).

D13 (nucleophile) is an active-site residue. The Mg(2+) site is built by D13, D15, and D214.

It belongs to the HAD-like hydrolase superfamily. MPGP family. Requires Mg(2+) as cofactor.

The protein localises to the cytoplasm. The enzyme catalyses 2-O-(alpha-D-mannosyl)-3-phosphoglycerate + H2O = (2R)-2-O-(alpha-D-mannosyl)-glycerate + phosphate. This Escherichia coli O17:K52:H18 (strain UMN026 / ExPEC) protein is Mannosyl-3-phosphoglycerate phosphatase.